The sequence spans 234 residues: MKFSFVSLFPNLMEFYFQDSILARAKEKKLFKLNFYNPRDFSKNSYHKVDDYKIGGGAGLLMQAEPMYEVLRSIQEKKENPYFIFLNPSGKTFNQKDAKRLSKKEHIVFVCGRYEGIDERVLEIFANEVFSIGDFILTGGELPALVMCDAILRNVNGVLGNMESLEEESFENNLLEAPAFSKPFIFEKKNKKFYTPSEFLKGNHARIASLKTTLASCKTKFFRPDLFLEHERKK.

Residues glycine 112 and 132–137 each bind S-adenosyl-L-methionine; that span reads IGDFIL.

The protein belongs to the RNA methyltransferase TrmD family. In terms of assembly, homodimer.

It localises to the cytoplasm. The enzyme catalyses guanosine(37) in tRNA + S-adenosyl-L-methionine = N(1)-methylguanosine(37) in tRNA + S-adenosyl-L-homocysteine + H(+). Specifically methylates guanosine-37 in various tRNAs. The sequence is that of tRNA (guanine-N(1)-)-methyltransferase from Campylobacter jejuni subsp. jejuni serotype O:6 (strain 81116 / NCTC 11828).